A 353-amino-acid polypeptide reads, in one-letter code: Heat-inducible transcription repressor HrcA (353 aa).

The protein belongs to the HrcA family.

Negative regulator of class I heat shock genes (grpE-dnaK-dnaJ and groELS operons). Prevents heat-shock induction of these operons. The chain is Heat-inducible transcription repressor HrcA from Anaeromyxobacter dehalogenans (strain 2CP-1 / ATCC BAA-258).